Consider the following 152-residue polypeptide: Heavy metal-associated isoprenylated plant protein 20 (152 aa).

Residues 27 to 90 (MQTVNIKVKM…RIERTGKKAE (64 aa)) form the HMA domain. The Cd(2+) site is built by Cys-38 and Cys-41. Position 149 is a cysteine methyl ester (Cys-149). Cys-149 carries S-farnesyl cysteine lipidation. Positions 150-152 (TVM) are cleaved as a propeptide — removed in mature form.

It belongs to the HIPP family. Interacts with ZHD11/HB29. As to expression, expressed in roots, shoot apical meristem, leaves and flowers.

It localises to the membrane. Functionally, heavy-metal-binding protein. Binds cadmium. May be involved in cadmium transport and play a role in cadmium detoxification. The protein is Heavy metal-associated isoprenylated plant protein 20 of Arabidopsis thaliana (Mouse-ear cress).